Here is a 738-residue protein sequence, read N- to C-terminus: MEHTYQYAWVIPLLPLPVIMSMGFGLFLIPTATKNLRRIWAFPSILLLSIAMVFSLHLSIQQINGSSIYQYLWSWTINNDFSLEFGYLVDPLTSIMLILITTVGILVLIYSDDYMSHDEGYLRFFVYISFFNTSMLGLVTSSNLIQIYFFWELVGMCSYLLIGFWFTRPIAASACQKAFVTNRVGDFGLLLGILGFFWITGSLEFRDLFKIANNWIPNNGINSLLTTLCAFLLFLGAVAKSAQFPLHVWLPDAMEGPTPISALIHAATMVAAGIFLLARLLPLFISLPLIMSFISLVGTITLFLGATLALAQRDIKRSLAYSTMSQLGYMMLALGIGSYQAALFHLITHAYSKALLFLGSGSVIHSMEPLVGYSPDKSQNMVLMGGLRKYVPITRTTFLCGTLSLCGIPPLACFWSKDEILSNSWLYSPFFGIIASFTAGLTAFYMFRIYLLTFDGYLRVNFQNYSSTKEGSLYSISLWGKSISKGVNRDFVLSTMKSGVSFFSQNIPKIPANTRNKIGSFSTPFGAKKTFVYPHETGNTMLFPLLILLLFTLFIGSIGIPFDNGVKDNRILELTILSKWLTPSINLFQENSNSSINSYEFLTNAISSVSLAIFGLFIAYIFYGSAYSFFQNLNFQNSLVKKNPKKSFLDEVKKKIYSWSYNRGYIDFFYTRVFILGIRRLAELTHFFDKGVIDGIINGVGLAGFCIGEEIKYVGGGRISSYLFFFLCYVSLFLFFIP.

Helical transmembrane passes span 9–29 (WVIP…LFLI), 39–59 (IWAF…LHLS), 89–109 (VDPL…LVLI), 125–145 (FVYI…SNLI), 147–167 (IYFF…FWFT), 185–205 (GDFG…SLEF), 219–239 (NGIN…GAVA), 258–278 (TPIS…FLLA), 280–300 (LLPL…VGTI), 327–347 (LGYM…FHLI), 354–374 (ALLF…VGYS), 396–416 (TTFL…CFWS), 425–445 (WLYS…TAFY), 542–562 (LFPL…GIPF), 610–630 (SLAI…YSFF), 691–711 (GVID…GEEI), and 717–737 (GRIS…LFFI).

This sequence belongs to the complex I subunit 5 family. As to quaternary structure, NDH is composed of at least 16 different subunits, 5 of which are encoded in the nucleus.

The protein resides in the plastid. The protein localises to the chloroplast thylakoid membrane. The enzyme catalyses a plastoquinone + NADH + (n+1) H(+)(in) = a plastoquinol + NAD(+) + n H(+)(out). It carries out the reaction a plastoquinone + NADPH + (n+1) H(+)(in) = a plastoquinol + NADP(+) + n H(+)(out). NDH shuttles electrons from NAD(P)H:plastoquinone, via FMN and iron-sulfur (Fe-S) centers, to quinones in the photosynthetic chain and possibly in a chloroplast respiratory chain. The immediate electron acceptor for the enzyme in this species is believed to be plastoquinone. Couples the redox reaction to proton translocation, and thus conserves the redox energy in a proton gradient. The protein is NAD(P)H-quinone oxidoreductase subunit 5, chloroplastic (ndhF) of Sorghum bicolor (Sorghum).